A 399-amino-acid chain; its full sequence is MGRAEKVVLAYSGGVDTSVCIPYLMHEWGVKEVITLAADLGQGEELGPIKQKALNSGAVVSLVEDGREEFITDYAFPAIKANALYENRYPLATALARPLIAKMLVRAAEKYGADAVAHGCTAKGNDQVRFDLGILAQNPEIKVLAPAREWGMSREEAITYGEQYGLTFPVKKSSPFSIDKNLLGRSIEAGPLEDPMCEPPEEVFEMVKAISDTPDEPEYLEIGFEKGVPVMVNGEALGPVALISKLNEIVGNHGIGRIDMIENRVVGIKSREIYESPAMCVLVDAHRDLESLTLTADVTQYKRGMEQTYSELIYRGLWFSPLKQAVDAFIEQTQERVTGVVRLKLHKGTARIVGRRSEKSIYTPDLATYGADDKFNHESAEGFIYIWGLPTRVWAQANK.

Residues 10-18 (AYSGGVDTS) and A38 contribute to the ATP site. Y89 is a binding site for L-citrulline. G119 is an ATP binding site. L-aspartate contacts are provided by T121, N125, and D126. An L-citrulline-binding site is contributed by N125. 5 residues coordinate L-citrulline: R129, S177, S186, E262, and Y274.

Belongs to the argininosuccinate synthase family. Type 1 subfamily. As to quaternary structure, homotetramer.

It localises to the cytoplasm. It catalyses the reaction L-citrulline + L-aspartate + ATP = 2-(N(omega)-L-arginino)succinate + AMP + diphosphate + H(+). Its pathway is amino-acid biosynthesis; L-arginine biosynthesis; L-arginine from L-ornithine and carbamoyl phosphate: step 2/3. The sequence is that of Argininosuccinate synthase from Picosynechococcus sp. (strain ATCC 27264 / PCC 7002 / PR-6) (Agmenellum quadruplicatum).